Reading from the N-terminus, the 408-residue chain is LL-diaminopimelate aminotransferase (408 aa).

Positions 15 and 42 each coordinate substrate. Residues tyrosine 72, 108-109 (AK), tyrosine 132, asparagine 186, tyrosine 217, and 245-247 (SFS) contribute to the pyridoxal 5'-phosphate site. 3 residues coordinate substrate: lysine 109, tyrosine 132, and asparagine 186. Lysine 248 bears the N6-(pyridoxal phosphate)lysine mark. Arginine 256 and asparagine 291 together coordinate pyridoxal 5'-phosphate. Residues asparagine 291 and arginine 386 each coordinate substrate.

It belongs to the class-I pyridoxal-phosphate-dependent aminotransferase family. LL-diaminopimelate aminotransferase subfamily. As to quaternary structure, homodimer. Requires pyridoxal 5'-phosphate as cofactor.

The enzyme catalyses (2S,6S)-2,6-diaminopimelate + 2-oxoglutarate = (S)-2,3,4,5-tetrahydrodipicolinate + L-glutamate + H2O + H(+). The protein operates within amino-acid biosynthesis; L-lysine biosynthesis via DAP pathway; LL-2,6-diaminopimelate from (S)-tetrahydrodipicolinate (aminotransferase route): step 1/1. Involved in the synthesis of meso-diaminopimelate (m-DAP or DL-DAP), required for both lysine and peptidoglycan biosynthesis. Catalyzes the direct conversion of tetrahydrodipicolinate to LL-diaminopimelate. This Desulfotalea psychrophila (strain LSv54 / DSM 12343) protein is LL-diaminopimelate aminotransferase.